The chain runs to 395 residues: E3 ubiquitin-protein ligase NHLRC1 (395 aa).

An RING-type zinc finger spans residues 26–72 (CKVCFEKFGHRQQRRPRNLSCGHVVCLACVAALAHPRTLALECPFCR). NHL repeat units lie at residues 113–157 (ALTC…FDSG), 161–204 (AHQF…FDFF), 205–245 (GQIK…LDVD), 248–300 (EGVL…FSSS), 301–349 (MQLV…LGKP), and 350–393 (EEFP…YKVD).

Interacts with AGL. Interacts (via the NHL repeats) with EPM2A/laforin. Forms a complex with EPM2A/laforin and HSP70. Interacts with PRDM8. In terms of tissue distribution, expressed in brain, cerebellum, spinal cord, medulla, heart, liver, skeletal muscle and pancreas.

Its subcellular location is the endoplasmic reticulum. The protein localises to the nucleus. It catalyses the reaction S-ubiquitinyl-[E2 ubiquitin-conjugating enzyme]-L-cysteine + [acceptor protein]-L-lysine = [E2 ubiquitin-conjugating enzyme]-L-cysteine + N(6)-ubiquitinyl-[acceptor protein]-L-lysine.. It participates in protein modification; protein ubiquitination. E3 ubiquitin-protein ligase. Together with the phosphatase EPM2A/laforin, appears to be involved in the clearance of toxic polyglucosan and protein aggregates via multiple pathways. In complex with EPM2A/laforin and HSP70, suppresses the cellular toxicity of misfolded proteins by promoting their degradation through the ubiquitin-proteasome system (UPS). Ubiquitinates the glycogen-targeting protein phosphatase subunits PPP1R3C/PTG and PPP1R3D in a laforin-dependent manner and targets them for proteasome-dependent degradation, thus decreasing glycogen accumulation. Polyubiquitinates EPM2A/laforin and ubiquitinates AGL and targets them for proteasome-dependent degradation. Also promotes proteasome-independent protein degradation through the macroautophagy pathway. This is E3 ubiquitin-protein ligase NHLRC1 (NHLRC1) from Homo sapiens (Human).